The chain runs to 223 residues: DNA mismatch repair protein MutH (223 aa).

It belongs to the MutH family.

The protein resides in the cytoplasm. Sequence-specific endonuclease that cleaves unmethylated GATC sequences. It is involved in DNA mismatch repair. This is DNA mismatch repair protein MutH from Haemophilus influenzae (strain 86-028NP).